The primary structure comprises 395 residues: S-adenosylmethionine synthase (395 aa).

Residue His14 participates in ATP binding. Residue Asp16 coordinates Mg(2+). A K(+)-binding site is contributed by Glu42. Residues Glu55 and Gln98 each coordinate L-methionine. The tract at residues 98-108 (QSPDIALGVDK) is flexible loop. Residues 174–176 (DGK), 240–241 (RF), Asp249, 255–256 (RK), Ala272, and Lys276 each bind ATP. L-methionine is bound at residue Asp249. Lys280 is a binding site for L-methionine.

Belongs to the AdoMet synthase family. In terms of assembly, homotetramer; dimer of dimers. The cofactor is Mg(2+). It depends on K(+) as a cofactor.

Its subcellular location is the cytoplasm. It catalyses the reaction L-methionine + ATP + H2O = S-adenosyl-L-methionine + phosphate + diphosphate. It participates in amino-acid biosynthesis; S-adenosyl-L-methionine biosynthesis; S-adenosyl-L-methionine from L-methionine: step 1/1. Its function is as follows. Catalyzes the formation of S-adenosylmethionine (AdoMet) from methionine and ATP. The overall synthetic reaction is composed of two sequential steps, AdoMet formation and the subsequent tripolyphosphate hydrolysis which occurs prior to release of AdoMet from the enzyme. In Thermotoga neapolitana (strain ATCC 49049 / DSM 4359 / NBRC 107923 / NS-E), this protein is S-adenosylmethionine synthase.